The sequence spans 202 residues: Glycerol-3-phosphate acyltransferase (202 aa).

6 helical membrane passes run 2 to 22 (MIIVMLLLSYLIGAFPSGFVI), 54 to 74 (FLVTFLDIFKGFITVFFPLWL), 85 to 105 (FFTNGLIVGLFAILGHVYPVY), 120 to 140 (VVLGVNPILLLILAIIFFIVL), 141 to 161 (KIFKYVSLASIVAAICCVIGS), and 162 to 182 (LIIQDYILLVVSFLVSIILII).

It belongs to the PlsY family. As to quaternary structure, probably interacts with PlsX.

The protein localises to the cell membrane. It carries out the reaction an acyl phosphate + sn-glycerol 3-phosphate = a 1-acyl-sn-glycero-3-phosphate + phosphate. Its pathway is lipid metabolism; phospholipid metabolism. Its function is as follows. Catalyzes the transfer of an acyl group from acyl-phosphate (acyl-PO(4)) to glycerol-3-phosphate (G3P) to form lysophosphatidic acid (LPA). This enzyme utilizes acyl-phosphate as fatty acyl donor, but not acyl-CoA or acyl-ACP. The polypeptide is Glycerol-3-phosphate acyltransferase (Staphylococcus aureus (strain USA300)).